An 898-amino-acid polypeptide reads, in one-letter code: Endoplasmic reticulum metallopeptidase 1 (898 aa).

Met1 carries the N-acetylmethionine modification. A disordered region spans residues 1-55 (MEWSSESAAVRRHRGTAERREGEAAASHRQREASAQEDAKGVGRMWGKTENGGGS). Residues 1–66 (MEWSSESAAV…VAKTALSEAR (66 aa)) lie on the Cytoplasmic side of the membrane. The span at 29–41 (RQREASAQEDAKG) shows a compositional bias: basic and acidic residues. A helical membrane pass occupies residues 67–87 (TALALALYLLALRALVQLSLQ). The Lumenal portion of the chain corresponds to 88-393 (RLVLSRTSGL…SSSEYRHGSM (306 aa)). The N-linked (GlcNAc...) asparagine glycan is linked to Asn176. A disulfide bond links Cys198 and Cys216. Zn(2+) contacts are provided by His199 and Asp211. Glu245 (proton acceptor) is an active-site residue. 3 residues coordinate Zn(2+): Glu246, Glu272, and His348. Residues 394–414 (VFFDVLGLLVIAYPSRVGSII) traverse the membrane as a helical segment. Residues 415–451 (NYMVVMAVVLYLGKKLLRPKHRNANYMRDFLCGLGIT) are Cytoplasmic-facing. The chain crosses the membrane as a helical span at residues 452–472 (FISWFTSLVTVLIIAVFISLI). Residues 473–480 (GQSLSWYN) lie on the Lumenal side of the membrane. Residues 481–501 (YFYIAVCLYGTATVAKIIFIH) traverse the membrane as a helical segment. The Cytoplasmic segment spans residues 502-515 (TLAKRFYYMNASDL). A helical transmembrane segment spans residues 516 to 538 (YLGELFFDTSLFVHCAFLVALTY). Residues 539 to 542 (QGFC) are Lumenal-facing. The helical transmembrane segment at 543–562 (SAFMSAVWVVFPLLTKLCVY) threads the bilayer. The Cytoplasmic portion of the chain corresponds to 563–573 (KDFKKHGAQGR). A helical transmembrane segment spans residues 574 to 594 (FVALYLLGMFIPYLYGLYLIW). The Lumenal segment spans residues 595-615 (AVFEMFTPILGRSGSEIPPDV). A helical transmembrane segment spans residues 616-636 (VLASILAVCVMILSSYFITFI). The Cytoplasmic segment spans residues 637-645 (YLVNSTKKT). Residues 646-666 (ILTLILVCAVTFLLVCSGAFF) traverse the membrane as a helical segment. Residues 667–898 (PYSSNPESPK…WVSTYSLFVF (232 aa)) lie on the Lumenal side of the membrane. N-linked (GlcNAc...) asparagine glycosylation occurs at Asn724.

This sequence belongs to the peptidase M28 family. Zn(2+) serves as cofactor.

The protein localises to the endoplasmic reticulum membrane. Within the ovary, required for the organization of somatic cells and oocytes into discrete follicular structures. The chain is Endoplasmic reticulum metallopeptidase 1 from Mus musculus (Mouse).